We begin with the raw amino-acid sequence, 67 residues long: COP9 signalosome complex subunit 9 homolog (67 aa).

A disordered region spans residues 1–31 (MKPSLAADEMFSEGPGYMEMDESGGATGMMM).

It belongs to the CSN9 family. As to quaternary structure, probable component of the COP9 signalosome (CSN) complex.

Functionally, component of the COP9 signalosome complex (CSN), a complex involved in various cellular and developmental processes. The CSN complex is an essential regulator of the ubiquitin (Ubl) conjugation pathway by mediating the deneddylation of the cullin subunits of SCF-type E3 ligase complexes, leading to decrease the Ubl ligase activity. This is COP9 signalosome complex subunit 9 homolog from Drosophila melanogaster (Fruit fly).